Consider the following 313-residue polypeptide: Malate dehydrogenase (313 aa).

11-16 contacts NAD(+); sequence GAGHTG. Positions 86 and 92 each coordinate substrate. NAD(+) contacts are provided by residues asparagine 99 and 122 to 124; that span reads LTN. The substrate site is built by asparagine 124 and arginine 155. Histidine 179 serves as the catalytic Proton acceptor.

The protein belongs to the LDH/MDH superfamily. MDH type 3 family.

The catalysed reaction is (S)-malate + NAD(+) = oxaloacetate + NADH + H(+). In terms of biological role, catalyzes the reversible oxidation of malate to oxaloacetate. In Staphylococcus epidermidis (strain ATCC 35984 / DSM 28319 / BCRC 17069 / CCUG 31568 / BM 3577 / RP62A), this protein is Malate dehydrogenase.